The sequence spans 401 residues: Protein zntC (401 aa).

Helical transmembrane passes span 33-53 (GGLI…PWFL), 61-81 (LVSV…GAGF), and 114-134 (ITIV…SGGL). The segment at 141–247 (NHMDLSQHNH…SHKDEKDSEK (107 aa)) is disordered. Acidic residues predominate over residues 167–184 (GDDDDDDVNEDQEEDSTK). The segment covering 200–209 (HNSSNSSSNG) has biased composition (low complexity). Residues 212 to 225 (HGLKKKKKSKKEHG) show a composition bias toward basic residues. Positions 226-247 (HGHNHDHSSNGHSHKDEKDSEK) are enriched in basic and acidic residues. 5 consecutive transmembrane segments (helical) span residues 256–276 (AWVF…GLGS), 285–305 (GLLI…GIAI), 316–336 (CIAL…GMAI), 351–371 (GIIL…ELLP), and 381–401 (KLKL…ALWV).

It belongs to the ZIP transporter (TC 2.A.5) family.

The protein localises to the membrane. In terms of biological role, may transport divalent cations. May participate, with dstA, in the regulation of the differentiation of stalk cells during development. This Dictyostelium discoideum (Social amoeba) protein is Protein zntC (zntC).